Here is a 337-residue protein sequence, read N- to C-terminus: MLEKFARYPLTFGPTPIEKLERLSKHLGGNVEIYAKREDCNSGLAYGGNKLRKLEYIIPDAIASNADTLVSIGGVQSNHTRMIAAVAAKIGMKCRLVQEAWVPHEDAVYDRVGNIMLSRIMGADVRLVDDGFDIGIRKSWEQAIEEVKAAGGKPYAIPAGASVHKYGGLGYVGFAEEVRKQEAELGFKFDYIVVCTVTGSTHAGMLVGFAADGRARKVIGIDGSFTPAQTKAQVLSIAQNTAKLVELGKDIVADDVVLIEDYAYPAYGVPSEETKEAIRLTARLEAMITDPVYEGKSMQGLIDLTQKGYFEKGAKVLYAHLGGAPALNGYGYAFRNG.

Lysine 50 is modified (N6-(pyridoxal phosphate)lysine). Residue serine 77 is the Nucleophile of the active site.

Belongs to the ACC deaminase/D-cysteine desulfhydrase family. Homotrimer. The cofactor is pyridoxal 5'-phosphate.

It carries out the reaction 1-aminocyclopropane-1-carboxylate + H2O = 2-oxobutanoate + NH4(+). Catalyzes a cyclopropane ring-opening reaction, the irreversible conversion of 1-aminocyclopropane-1-carboxylate (ACC) to ammonia and alpha-ketobutyrate. Allows growth on ACC as a nitrogen source. This is 1-aminocyclopropane-1-carboxylate deaminase from Bradyrhizobium diazoefficiens (strain JCM 10833 / BCRC 13528 / IAM 13628 / NBRC 14792 / USDA 110).